Here is a 172-residue protein sequence, read N- to C-terminus: Large ribosomal subunit protein uL10 (172 aa).

The protein belongs to the universal ribosomal protein uL10 family. In terms of assembly, part of the ribosomal stalk of the 50S ribosomal subunit. The N-terminus interacts with L11 and the large rRNA to form the base of the stalk. The C-terminus forms an elongated spine to which L12 dimers bind in a sequential fashion forming a multimeric L10(L12)X complex.

In terms of biological role, forms part of the ribosomal stalk, playing a central role in the interaction of the ribosome with GTP-bound translation factors. The chain is Large ribosomal subunit protein uL10 from Afipia carboxidovorans (strain ATCC 49405 / DSM 1227 / KCTC 32145 / OM5) (Oligotropha carboxidovorans).